The primary structure comprises 168 residues: Cytochrome c-type biogenesis protein CcmE (168 aa).

The Cytoplasmic portion of the chain corresponds to 1-23 (MTTAPSGLPGTPLPPARRRERPR). A helical; Signal-anchor for type II membrane protein transmembrane segment spans residues 24–44 (WPLLVAGAAVLGLIGYMVLGN). Topologically, residues 45–168 (ANSNLVYYVL…KILNDQSTKP (124 aa)) are extracellular. The heme site is built by His-137 and Tyr-141. The disordered stretch occupies residues 145 to 168 (DSKGEGQYSQDDLKKILNDQSTKP).

It belongs to the CcmE/CycJ family.

Its subcellular location is the cell membrane. In terms of biological role, heme chaperone required for the biogenesis of c-type cytochromes. Transiently binds heme delivered by CcmC and transfers the heme to apo-cytochromes in a process facilitated by CcmF and CcmH. This chain is Cytochrome c-type biogenesis protein CcmE, found in Deinococcus radiodurans (strain ATCC 13939 / DSM 20539 / JCM 16871 / CCUG 27074 / LMG 4051 / NBRC 15346 / NCIMB 9279 / VKM B-1422 / R1).